The primary structure comprises 180 residues: Large ribosomal subunit protein uL5 (180 aa).

The protein belongs to the universal ribosomal protein uL5 family. As to quaternary structure, part of the 50S ribosomal subunit; part of the 5S rRNA/L5/L18/L25 subcomplex. Contacts the 5S rRNA and the P site tRNA. Forms a bridge to the 30S subunit in the 70S ribosome.

Functionally, this is one of the proteins that bind and probably mediate the attachment of the 5S RNA into the large ribosomal subunit, where it forms part of the central protuberance. In the 70S ribosome it contacts protein S13 of the 30S subunit (bridge B1b), connecting the 2 subunits; this bridge is implicated in subunit movement. Contacts the P site tRNA; the 5S rRNA and some of its associated proteins might help stabilize positioning of ribosome-bound tRNAs. The polypeptide is Large ribosomal subunit protein uL5 (Lactobacillus delbrueckii subsp. bulgaricus (strain ATCC 11842 / DSM 20081 / BCRC 10696 / JCM 1002 / NBRC 13953 / NCIMB 11778 / NCTC 12712 / WDCM 00102 / Lb 14)).